A 168-amino-acid polypeptide reads, in one-letter code: Protein SprT (168 aa).

The region spanning Glu20–Ile166 is the SprT-like domain. Zn(2+) is bound at residue His78. Glu79 is a catalytic residue. His82 contributes to the Zn(2+) binding site.

It belongs to the SprT family. The cofactor is Zn(2+).

The protein localises to the cytoplasm. The sequence is that of Protein SprT from Proteus mirabilis (strain HI4320).